Consider the following 413-residue polypeptide: MQTYLVGGAVRDRLLGLPQGDRDHLVVGATVEQMLALGFSQVGRDFPVFLHPKTQQEYALARTERKQGRGYTGFVCHASPEVTLEQDLLRRDLTINAIAEDEEGRLHDPYGGIQDLEQRMLRHVSPAFAEDPLRILRVARFAARFHAQGFVVAPETLALMREMTDAGELAHLTPERVWKELEKVLLGQTPQVFFEVLRECGALKALFPELDALFGVPAPAKWHPEIDTGIHTLMVLAQACRLSPELAVRFAALCHDFGKGLTPPAFWPSHHGHGQKGLPLIRDFCERFRVPNDCRDLALLVSDLHTHIHIAFELKPATLLKVFDKADAWRRPERFAQLLDACRADFHGRTGFEERVYAEPDYVAQALGAAQAVPVKDIVAAGFKGEAIREQLAKRRFDAISRVRDEWTFIDEE.

Residues glycine 8 and arginine 11 each contribute to the ATP site. Residues glycine 8 and arginine 11 each contribute to the CTP site. Mg(2+) is bound by residues aspartate 21 and aspartate 23. ATP-binding residues include arginine 91, arginine 137, and arginine 140. Arginine 91, arginine 137, and arginine 140 together coordinate CTP. Residues 228–329 form the HD domain; the sequence is TGIHTLMVLA…LKVFDKADAW (102 aa).

The protein belongs to the tRNA nucleotidyltransferase/poly(A) polymerase family. Bacterial CCA-adding enzyme type 1 subfamily. Monomer. Can also form homodimers and oligomers. It depends on Mg(2+) as a cofactor. The cofactor is Ni(2+).

The catalysed reaction is a tRNA precursor + 2 CTP + ATP = a tRNA with a 3' CCA end + 3 diphosphate. It carries out the reaction a tRNA with a 3' CCA end + 2 CTP + ATP = a tRNA with a 3' CCACCA end + 3 diphosphate. Functionally, catalyzes the addition and repair of the essential 3'-terminal CCA sequence in tRNAs without using a nucleic acid template. Adds these three nucleotides in the order of C, C, and A to the tRNA nucleotide-73, using CTP and ATP as substrates and producing inorganic pyrophosphate. tRNA 3'-terminal CCA addition is required both for tRNA processing and repair. Also involved in tRNA surveillance by mediating tandem CCA addition to generate a CCACCA at the 3' terminus of unstable tRNAs. While stable tRNAs receive only 3'-terminal CCA, unstable tRNAs are marked with CCACCA and rapidly degraded. This Aeromonas salmonicida (strain A449) protein is Multifunctional CCA protein.